A 78-amino-acid chain; its full sequence is Small ribosomal subunit protein bS18 (78 aa).

It belongs to the bacterial ribosomal protein bS18 family. In terms of assembly, part of the 30S ribosomal subunit. Forms a tight heterodimer with protein bS6.

Functionally, binds as a heterodimer with protein bS6 to the central domain of the 16S rRNA, where it helps stabilize the platform of the 30S subunit. This Lactobacillus johnsonii (strain CNCM I-12250 / La1 / NCC 533) protein is Small ribosomal subunit protein bS18.